The following is a 180-amino-acid chain: Shikimate kinase (180 aa).

14–19 serves as a coordination point for ATP; the sequence is GAGKSS. A Mg(2+)-binding site is contributed by serine 18. Residues aspartate 36, arginine 60, and glycine 82 each contribute to the substrate site. ATP is bound at residue arginine 120. Arginine 139 provides a ligand contact to substrate.

This sequence belongs to the shikimate kinase family. In terms of assembly, monomer. Mg(2+) serves as cofactor.

Its subcellular location is the cytoplasm. It catalyses the reaction shikimate + ATP = 3-phosphoshikimate + ADP + H(+). It participates in metabolic intermediate biosynthesis; chorismate biosynthesis; chorismate from D-erythrose 4-phosphate and phosphoenolpyruvate: step 5/7. Catalyzes the specific phosphorylation of the 3-hydroxyl group of shikimic acid using ATP as a cosubstrate. The sequence is that of Shikimate kinase from Xylella fastidiosa (strain M23).